The following is a 545-amino-acid chain: Glucans biosynthesis protein G (545 aa).

Positions 1 to 35 (MIRVSSAVQRHAQKLIVLFSLLFGASLLMSDNGFA) are cleaved as a signal peptide.

It belongs to the OpgD/OpgG family.

It is found in the periplasm. Its pathway is glycan metabolism; osmoregulated periplasmic glucan (OPG) biosynthesis. Involved in the biosynthesis of osmoregulated periplasmic glucans (OPGs). The polypeptide is Glucans biosynthesis protein G (Vibrio cholerae serotype O1 (strain ATCC 39541 / Classical Ogawa 395 / O395)).